Here is a 445-residue protein sequence, read N- to C-terminus: 6-phosphogluconate dehydrogenase, decarboxylating (445 aa).

NADP(+)-binding positions include 1-4 (AVMG), 22-24 (NRS), 63-65 (VKA), and Asn91. Residues Asn91 and 117 to 119 (SGG) each bind substrate. Lys172 serves as the catalytic Proton acceptor. 175–176 (HN) is a binding site for substrate. The active-site Proton donor is the Glu179. 5 residues coordinate substrate: Tyr180, Lys249, Arg276, Arg434, and His440.

Belongs to the 6-phosphogluconate dehydrogenase family. Homodimer.

The catalysed reaction is 6-phospho-D-gluconate + NADP(+) = D-ribulose 5-phosphate + CO2 + NADPH. It functions in the pathway carbohydrate degradation; pentose phosphate pathway; D-ribulose 5-phosphate from D-glucose 6-phosphate (oxidative stage): step 3/3. Functionally, catalyzes the oxidative decarboxylation of 6-phosphogluconate to ribulose 5-phosphate and CO(2), with concomitant reduction of NADP to NADPH. The protein is 6-phosphogluconate dehydrogenase, decarboxylating (gnd) of Shigella sonnei.